A 500-amino-acid polypeptide reads, in one-letter code: MVLSKTASKSDDSIHSTFASRYVRNSISRFEIPKNSIPKEAAYQIINDELKFDGNPRLNLASFVTTWMEPECDKLMMESINKNNVEMDQYPVTTDLQNRCVNMIARLFNAPLGDGEAAIGVGTVGSSEAVMLAGLAFKRQWQNKRKALGLPYDRPNIVTGANIQVCLEKFARYFEVELKEVKLREGYYVMDPDKAVEMVDENTICVVAILGSTLTGEFEDVKLLNDLLVEKNKKTGWDTPIHVDAASGGFIAPFLYPDLEWDFRLPLVKSINVSGHKYGLVYAGIGWVVWRTKTDLPDELIFHINYLGADQPTFTLNFSKGSSQVIAQYYQLIRLGFEGYRNVMDNCRENMMVLRQGLEKTGRFNIVSKENGVPLVAFSLKDSSRHNEFEVAEMLRRFGWIVPAYTMPADAQHVTVLRVVIREDFSRTLAERLVADFEKVLHELDTLPARVHAKMASGKVNGVKKTPEETQREVTAYWKKFVDTKTDKNGVPLVASITNQ.

Serine 8 is subject to Phosphoserine. Position 277 is an N6-(pyridoxal phosphate)lysine (lysine 277).

The protein belongs to the group II decarboxylase family. As to quaternary structure, homohexamer. Interacts with calmodulin. Requires pyridoxal 5'-phosphate as cofactor. As to expression, expressed at low levels in siliques.

The catalysed reaction is L-glutamate + H(+) = 4-aminobutanoate + CO2. Its function is as follows. Catalyzes the production of GABA. The calmodulin-binding is calcium-dependent and it is proposed that this may, directly or indirectly, form a calcium regulated control of GABA biosynthesis. The sequence is that of Glutamate decarboxylase 3 (GAD3) from Arabidopsis thaliana (Mouse-ear cress).